The primary structure comprises 156 residues: Small ribosomal subunit protein uS7 (156 aa).

Belongs to the universal ribosomal protein uS7 family. Part of the 30S ribosomal subunit. Contacts proteins S9 and S11.

In terms of biological role, one of the primary rRNA binding proteins, it binds directly to 16S rRNA where it nucleates assembly of the head domain of the 30S subunit. Is located at the subunit interface close to the decoding center, probably blocks exit of the E-site tRNA. This is Small ribosomal subunit protein uS7 from Gloeothece citriformis (strain PCC 7424) (Cyanothece sp. (strain PCC 7424)).